Here is a 295-residue protein sequence, read N- to C-terminus: Craniofacial development protein 1 (295 aa).

Composition is skewed to acidic residues over residues 1-18 (MEEFDSEDFSTSDEDEDY) and 25-43 (YSEDDVNELVKEDEVDGEE). Disordered stretches follow at residues 1–155 (MEEF…KPKE) and 188–219 (FLKQTEKEKPQALVTSAATPPPAGSGIKRTSG). The segment covering 49-65 (KGKRRKAQSIPARKRKQ) has biased composition (basic residues). Residues 70-93 (LDEEEDGEEDSGGSSREEDEEEQE) are compositionally biased toward acidic residues. Ser80, Ser83, Ser84, and Ser112 each carry phosphoserine. The span at 120 to 130 (KSKAASSSQVK) shows a compositional bias: low complexity. Basic and acidic residues-rich tracts occupy residues 145-155 (VKADELEKPKE) and 188-197 (FLKQTEKEKP). A Glycyl lysine isopeptide (Lys-Gly) (interchain with G-Cter in SUMO2) cross-link involves residue Lys146. The hydrophilic stretch occupies residues 174–213 (VTKEVDATSKEAKSFLKQTEKEKPQALVTSAATPPPAGSG). Position 212 is a phosphoserine (Ser212). The region spanning 214–295 (IKRTSGMSSL…RDLRLSKMKP (82 aa)) is the BCNT-C domain. N6-methyllysine is present on Lys215. The residue at position 246 (Ser246) is a Phosphoserine.

The protein resides in the chromosome. Its subcellular location is the centromere. It is found in the kinetochore. In terms of biological role, may play a role during embryogenesis. The sequence is that of Craniofacial development protein 1 (Cfdp1) from Rattus norvegicus (Rat).